The chain runs to 97 residues: Co-chaperonin GroES (97 aa).

This sequence belongs to the GroES chaperonin family. In terms of assembly, heptamer of 7 subunits arranged in a ring. Interacts with the chaperonin GroEL.

Its subcellular location is the cytoplasm. Together with the chaperonin GroEL, plays an essential role in assisting protein folding. The GroEL-GroES system forms a nano-cage that allows encapsulation of the non-native substrate proteins and provides a physical environment optimized to promote and accelerate protein folding. GroES binds to the apical surface of the GroEL ring, thereby capping the opening of the GroEL channel. This chain is Co-chaperonin GroES, found in Sodalis glossinidius (strain morsitans).